The primary structure comprises 1270 residues: Vigilin (1270 aa).

The segment covering 1–11 (MSSVAVLTQES) has biased composition (polar residues). Disordered regions lie at residues 1–23 (MSSVAVLTQESFAEHRSGLTQQQ) and 28–47 (ALNSEEENDPPTYKEAFPPL). KH domains lie at 150–188 (ASATVAIPKEHHRFVIGKNGEKLQDLELKTATKIQIPRP), 219–260 (DKRA…IPPP), 291–333 (KKKT…IPPT), 360–402 (ANSF…EFTE), 431–473 (INRT…IPPD), 504–545 (ENER…NFPD), 577–619 (VENS…LPGR), 651–693 (ANIT…FPTE), 724–766 (QTKS…FPTS), 798–840 (DNVV…LPTV), and 872–913 (EAQV…FPDR). The segment at 911–947 (PDREENPAPVAEPALQENGEEGGEGKDGKDADPSSPR) is disordered. Residues 933 to 947 (GEGKDGKDADPSSPR) show a composition bias toward basic and acidic residues. KH domains lie at 970-1012 (ALVP…VPAP), 1051-1093 (ALRS…FPDK), and 1126-1168 (LEQM…FPQS). The interval 1217–1270 (SHEESKVPSKGFVVRDAPCGTVNNEKAPDMSSSEDFPSFGAQVAPKTLPWGPKR) is disordered.

The protein localises to the cytoplasm. The sequence is that of Vigilin (HDLBP) from Gallus gallus (Chicken).